Consider the following 357-residue polypeptide: (+)-eremophilene synthase (357 aa).

Residues aspartate 100 and glutamate 105 each coordinate Mg(2+). The DDXXE motif motif lies at 100-105 (DDDFDE). Residue arginine 198 participates in substrate binding. 2 residues coordinate Mg(2+): asparagine 244 and serine 248. A substrate-binding site is contributed by lysine 251. Aspartate 252 is a binding site for Mg(2+). 331–332 (RY) serves as a coordination point for substrate.

Belongs to the terpene synthase family. Mg(2+) is required as a cofactor.

It catalyses the reaction (2E,6E)-farnesyl diphosphate = (+)-eremophilene + diphosphate. It functions in the pathway secondary metabolite biosynthesis; terpenoid biosynthesis. In terms of biological role, catalyzes the conversion of (2E,6E)-farnesyl diphosphate (FPP) to yield the bicyclic sesquiterpene eremophilene via a 1,10-cyclization, which requires the abstraction of the pyrophosphate from FPP to yield the (E,E)-germacradienyl cation. The only accepted substrate is farnesyl diphosphate (FPP). This is (+)-eremophilene synthase from Gibberella fujikuroi (strain CBS 195.34 / IMI 58289 / NRRL A-6831) (Bakanae and foot rot disease fungus).